We begin with the raw amino-acid sequence, 96 residues long: Co-chaperonin GroES (96 aa).

The protein belongs to the GroES chaperonin family. Heptamer of 7 subunits arranged in a ring. Interacts with the chaperonin GroEL.

The protein localises to the cytoplasm. In terms of biological role, together with the chaperonin GroEL, plays an essential role in assisting protein folding. The GroEL-GroES system forms a nano-cage that allows encapsulation of the non-native substrate proteins and provides a physical environment optimized to promote and accelerate protein folding. GroES binds to the apical surface of the GroEL ring, thereby capping the opening of the GroEL channel. The protein is Co-chaperonin GroES of Cupriavidus taiwanensis (strain DSM 17343 / BCRC 17206 / CCUG 44338 / CIP 107171 / LMG 19424 / R1) (Ralstonia taiwanensis (strain LMG 19424)).